The sequence spans 650 residues: AP-1-like transcription factor YAP1 (650 aa).

The disordered stretch occupies residues 1-89 (MSVSTAKRSL…AFRERKERKM (89 aa)). Residues S9, S14, and S17 each carry the phosphoserine modification. 3 stretches are compositionally biased toward basic and acidic residues: residues 22–50 (EGSK…EQPK), 58–68 (KKQDLDPETKQ), and 80–89 (AFRERKERKM). 2 consecutive short sequence motifs (bipartite nuclear localization signal) follow at residues 35–42 (HRRTGTRD) and 68–75 (QKRTAQNR). The bZIP domain maps to 64–127 (PETKQKRTAQ…ITLVNELKKY (64 aa)). Residues 67–90 (KQKRTAQNRAAQRAFRERKERKMK) form a basic motif region. The segment at 92 to 120 (LEKKVQSLESIQQQNEVEATFLRDQLITL) is leucine-zipper. Disordered stretches follow at residues 149-169 (HFSK…PNDD) and 183-251 (QYPL…PNSS). Polar residues predominate over residues 150–162 (FSKNNVNHSNSEP). T165 carries the post-translational modification Phosphothreonine. A compositionally biased stretch (polar residues) spans 195-209 (SKNVGKQLPSPNDPS). S204 is modified (phosphoserine). Residues 220-378 (QKKLSDATDS…YENSFSGFGR (159 aa)) form a transcription activation 1 region. Residues 226–246 (ATDSSSATLDSLSNSNDVLNN) show a composition bias toward low complexity. A n-CRD region spans residues 303 to 315 (CSKMNQVCGTRQC). Cystine bridges form between C303-C598, C310-C629, C598-C620, C598-C629, and C620-C629. The residue at position 372 (S372) is a Phosphoserine. Residues 392–414 (DNSTGSTDSTGSTGNKNKKNNNN) are compositionally biased toward low complexity. 3 disordered regions span residues 392–419 (DNST…DDVL), 510–532 (LFGE…DDES), and 551–591 (LQSV…VPSK). The transcription activation 2 stretch occupies residues 430–537 (NQVTNFFSPG…SDDESSLIKN (108 aa)). S528 bears the Phosphoserine mark. Residues 551-570 (LQSVPGNESEISQKNGSSLQ) show a composition bias toward polar residues. Residues 571 to 580 (NADKINNGND) show a composition bias toward low complexity. Positions 598 to 629 (CSEIWDRITTHPKYSDIDVDGLCSELMAKAKC) are c-CRD. Positions 614 to 621 (IDVDGLCS) match the Nuclear export signal motif.

It belongs to the bZIP family. YAP subfamily. In terms of assembly, interacts independent of oxidation state in the cytoplasm with the karyopherin PSE1/KAP121 (and less strongly with KAP123). The reduced form of YAP1 interacts in the nucleus with the nuclear export protein CRM1, and in the cytoplasm with YBP1 and the peroxiredoxin HYR1/GPX3/ORP1. Interacts with RBG1. Depending on the oxidative stress inducing agent, YAP1 can undergo two distinct conformational changes, both involving disulfide bond formation, and both masking the nuclear export signal, thus abolishing nuclear export by CRM1/exportin 1. The disulfide stress-inducing agent diamide leads to the formation of one of three possible disulfide bonds in the c-CRD. Peroxide stress induces the formation of the HYR1/GPX3- and YBP1-dependent interdomain disulfide bond between Cys-303 and Cys-598 (causing nuclear localization of YAP1), and the possibly stabilizing bond between Cys-310 and Cys-629 (required for full activity of YAP1).

It localises to the nucleus. Its subcellular location is the cytoplasm. Its function is as follows. Transcription activator involved in oxidative stress response and redox homeostasis. Regulates the transcription of genes encoding antioxidant enzymes and components of the cellular thiol-reducing pathways, including the thioredoxin system (TRX2, TRR1), the glutaredoxin system (GSH1, GLR1), superoxide dismutase (SOD1, SOD2), glutathione peroxidase (GPX2), and thiol-specific peroxidases (TSA1, AHP1). The induction of some of these genes requires the cooperative action of both, YAP1 and SKN7. Preferentially binds to promoters with the core binding site 5'-TTA[CG]TAA-3'. Activity of the transcription factor is controlled through oxidation of specific cysteine residues resulting in the alteration of its subcellular location. Oxidative stress (as well as carbon stress, but not increased temperature, acidic pH, or ionic stress) induces nuclear accumulation and as a result YAP1 transcriptional activity. Activation by hydrogen peroxide or thiol-reactive chemicals elicit distinct adaptive gene responses. Nuclear export is restored when disulfide bonds are reduced by thioredoxin (TRX2), whose expression is controlled by YAP1, providing a mechanism for negative autoregulation. When overexpressed, YAP1 confers pleiotropic drug-resistance and increases cellular tolerance to cadmium, iron chelators and zinc. In Saccharomyces cerevisiae (strain ATCC 204508 / S288c) (Baker's yeast), this protein is AP-1-like transcription factor YAP1.